Here is a 658-residue protein sequence, read N- to C-terminus: Protein teflon (658 aa).

The C2H2-type 1 zinc finger occupies 33-56 (LYCHFCRDLFTQLPEFLRHLQGAH). 2 disordered regions span residues 78-127 (EQDD…SEQK) and 151-175 (HINN…SESN). The span at 100-111 (IPAKSEDSRAID) shows a compositional bias: basic and acidic residues. The span at 118 to 127 (DNSPVKSEQK) shows a compositional bias: polar residues. Residues 608-630 (YFCKCCDDIFTLNEDYTRHLVSQ) form a C2H2-type 2; degenerate zinc finger. The C2H2-type 3 zinc-finger motif lies at 634 to 657 (YQCTKCIKAFKYRGHFEKHLQNVH).

The protein belongs to the Teflon family.

The protein localises to the nucleus. Its subcellular location is the chromosome. Functionally, specifically required in males for proper segregation of autosomal bivalents at meiosis I. Expression is required in the male germ line prior to spermatocyte stage S4. May have a role as a bridging molecule maintaining adhesion to hold autosome bivalents together via heterochromatic connections. The protein is Protein teflon of Drosophila erecta (Fruit fly).